Consider the following 83-residue polypeptide: Small ribosomal subunit protein bS16 (83 aa).

Belongs to the bacterial ribosomal protein bS16 family.

This Borrelia duttonii (strain Ly) protein is Small ribosomal subunit protein bS16.